Consider the following 198-residue polypeptide: MICOS complex subunit Mic26 (198 aa).

Residues 1-23 form the signal peptide; it reads MFKVIQRSVGPASLSLLTFRVYA. Asn-63 is a glycosylation site (N-linked (GlcNAc...) asparagine). A helical transmembrane segment spans residues 108 to 128; the sequence is PGFFPRLGVIGFAGFVGLLFA.

This sequence belongs to the apolipoprotein O/MICOS complex subunit Mic27 family. As to quaternary structure, component of the mitochondrial contact site and cristae organizing system (MICOS) complex, composed of at least MICOS10/MIC10, CHCHD3/MIC19, CHCHD6/MIC25, APOOL/MIC27, IMMT/MIC60, APOO/MIC23/MIC26 and MICOS13/MIC13. This complex was also known under the names MINOS or MitOS complex. The MICOS complex associates with mitochondrial outer membrane proteins SAMM50, MTX1 and MTX2 (together described as components of the mitochondrial outer membrane sorting assembly machinery (SAM) complex) and DNAJC11, mitochondrial inner membrane protein TMEM11 and with HSPA9. The MICOS and SAM complexes together with DNAJC11 are part of a large protein complex spanning both membranes termed the mitochondrial intermembrane space bridging (MIB) complex. Interacts with IMMT/MIC60. Interacts with MICOS10/MIC10 and APOOL/MIC27.

The protein resides in the mitochondrion inner membrane. Its subcellular location is the mitochondrion. It is found in the endoplasmic reticulum membrane. The protein localises to the golgi apparatus membrane. Functionally, component of the MICOS complex, a large protein complex of the mitochondrial inner membrane that plays crucial roles in the maintenance of crista junctions, inner membrane architecture, and formation of contact sites to the outer membrane. Plays a crucial role in crista junction formation and mitochondrial function. Can induce cardiac lipotoxicity by enhancing mitochondrial respiration and fatty acid metabolism in cardiac myoblasts. Promotes cholesterol efflux from macrophage cells. Detected in HDL, LDL and VLDL. Secreted by a microsomal triglyceride transfer protein (MTTP)-dependent mechanism, probably as a VLDL-associated protein that is subsequently transferred to HDL. This Mus musculus (Mouse) protein is MICOS complex subunit Mic26 (Apoo).